The chain runs to 776 residues: Transferrin receptor protein 1 (776 aa).

Topologically, residues 1 to 70 (MDHARAALSN…QPQRNGKRLC (70 aa)) are cytoplasmic. The short motif at 19–22 (YTRF) is the Endocytosis signal element. Ser-23 carries the phosphoserine modification. Cys-70 is lipidated: S-palmitoyl cysteine. Residues 71–91 (FLVIAAVLLLLIGFLIGYLSY) traverse the membrane as a helical; Signal-anchor for type II membrane protein segment. At 92 to 776 (RGRIELAARC…GDIWETDNEF (685 aa)) the chain is on the extracellular side. Positions 230–322 (SESGSVSGKP…GTGDPYTPGF (93 aa)) constitute a PA domain. N-linked (GlcNAc...) asparagine glycosylation is found at Asn-261, Asn-326, and Asn-391. Residues 586–776 (KGDTLENLRK…GDIWETDNEF (191 aa)) form a ligand-binding region. The Cell attachment site motif lies at 662–664 (RGD). A glycan (N-linked (GlcNAc...) asparagine) is linked at Asn-738.

The protein belongs to the peptidase M28 family. M28B subfamily. As to quaternary structure, homodimer; disulfide-linked. Binds one transferrin molecule per subunit. Post-translationally, stearoylated. Stearoylation does not affect iron uptake. In terms of processing, N- and O-glycosylated, phosphorylated and palmitoylated.

It is found in the cell membrane. The protein resides in the melanosome. Cellular uptake of iron occurs via receptor-mediated endocytosis of ligand-occupied transferrin receptor into specialized endosomes. Endosomal acidification leads to iron release. The apotransferrin-receptor complex is then recycled to the cell surface with a return to neutral pH and the concomitant loss of affinity of apotransferrin for its receptor. Transferrin receptor is necessary for development of erythrocytes and the nervous system. Acts as a lipid sensor that regulates mitochondrial fusion by regulating activation of the JNK pathway. When dietary levels of stearate (C18:0) are low, promotes activation of the JNK pathway, resulting in HUWE1-mediated ubiquitination and subsequent degradation of the mitofusin MFN2 and inhibition of mitochondrial fusion. When dietary levels of stearate (C18:0) are high, TFRC stearoylation inhibits activation of the JNK pathway and thus degradation of the mitofusin MFN2. Mediates uptake of NICOL1 into fibroblasts where it may regulate extracellular matrix production. The chain is Transferrin receptor protein 1 (TFRC) from Gallus gallus (Chicken).